A 679-amino-acid chain; its full sequence is Glycine--tRNA ligase beta subunit (679 aa).

The protein belongs to the class-II aminoacyl-tRNA synthetase family. In terms of assembly, tetramer of two alpha and two beta subunits.

It is found in the cytoplasm. The enzyme catalyses tRNA(Gly) + glycine + ATP = glycyl-tRNA(Gly) + AMP + diphosphate. The chain is Glycine--tRNA ligase beta subunit from Streptococcus equi subsp. zooepidemicus (strain H70).